The following is a 96-amino-acid chain: Protein Vpr (96 aa).

The tract at residues 1–42 (MEQAPEDQGPQREPYNQWALELLEELKNEAVRHFPRIWLHGL) is homooligomerization. Phosphoserine; by host occurs at positions 79, 94, and 96.

It belongs to the HIV-1 VPR protein family. As to quaternary structure, homooligomer, may form homodimer. Interacts with p6-gag region of the Pr55 Gag precursor protein through a (Leu-X-X)4 motif near the C-terminus of the P6gag protein. Interacts with host UNG. May interact with host RAD23A/HHR23A. Interacts with host VPRBP/DCAF1, leading to hijack the CUL4A-RBX1-DDB1-DCAF1/VPRBP complex, mediating ubiquitination of host proteins such as TERT and ZGPAT and arrest of the cell cycle in G2 phase. In terms of processing, phosphorylated on several residues by host. These phosphorylations regulate VPR activity for the nuclear import of the HIV-1 pre-integration complex.

Its subcellular location is the virion. It is found in the host nucleus. The protein resides in the host extracellular space. In terms of biological role, during virus replication, may deplete host UNG protein, and incude G2-M cell cycle arrest. Acts by targeting specific host proteins for degradation by the 26S proteasome, through association with the cellular CUL4A-DDB1 E3 ligase complex by direct interaction with host VPRPB/DCAF-1. Cell cycle arrest reportedly occurs within hours of infection and is not blocked by antiviral agents, suggesting that it is initiated by the VPR carried into the virion. Additionally, VPR induces apoptosis in a cell cycle dependent manner suggesting that these two effects are mechanistically linked. Detected in the serum and cerebrospinal fluid of AIDS patient, VPR may also induce cell death to bystander cells. During virus entry, plays a role in the transport of the viral pre-integration (PIC) complex to the host nucleus. This function is crucial for viral infection of non-dividing macrophages. May act directly at the nuclear pore complex, by binding nucleoporins phenylalanine-glycine (FG)-repeat regions. This Human immunodeficiency virus type 1 group M subtype B (isolate MN) (HIV-1) protein is Protein Vpr.